The primary structure comprises 90 residues: Translation initiation factor IF-1 2 (90 aa).

In terms of domain architecture, S1-like spans 1–72 (MAKEELLELD…TKGRINFRHK (72 aa)).

This sequence belongs to the IF-1 family. Component of the 30S ribosomal translation pre-initiation complex which assembles on the 30S ribosome in the order IF-2 and IF-3, IF-1 and N-formylmethionyl-tRNA(fMet); mRNA recruitment can occur at any time during PIC assembly.

Its subcellular location is the cytoplasm. One of the essential components for the initiation of protein synthesis. Stabilizes the binding of IF-2 and IF-3 on the 30S subunit to which N-formylmethionyl-tRNA(fMet) subsequently binds. Helps modulate mRNA selection, yielding the 30S pre-initiation complex (PIC). Upon addition of the 50S ribosomal subunit IF-1, IF-2 and IF-3 are released leaving the mature 70S translation initiation complex. The protein is Translation initiation factor IF-1 2 of Paraburkholderia xenovorans (strain LB400).